Consider the following 159-residue polypeptide: Fatty acid-binding protein homolog 1 (159 aa).

A signal peptide spans 1–17 (MCAKIALLLVLVGAASA).

This sequence belongs to the calycin superfamily. Fatty-acid binding protein (FABP) family. In terms of tissue distribution, first detected in hypodermal precursor cells at the time of gastrulation. From the two-fold stage through to three-fold stages, expression is localized exclusively to hyp-7 but disappears in newly hatched L1s and subsequent developmental stages. Expression from L1 to adult stages is found in a single neuron in the ventral cord with a process into the nerve ring.

The protein resides in the secreted. Its function is as follows. May play a role in sequestering potentially toxic fatty acids and their peroxidation products, or it may be involved in the maintenance of the impermeable lipid layer of the eggshell. The sequence is that of Fatty acid-binding protein homolog 1 (lbp-1) from Caenorhabditis elegans.